The sequence spans 180 residues: Fucolectin-2 (180 aa).

Positions 1 to 22 (MKVKMIMLLFQILAILTLKSDS) are cleaved as a signal peptide. The segment at 31 to 179 (QENVALRGRA…VEVNVLFPAP (149 aa)) is F5/8 type C-like. Residues asparagine 58, aspartate 61, asparagine 63, and serine 72 each contribute to the Ca(2+) site. 3 disulfides stabilise this stretch: cysteine 73–cysteine 168, cysteine 104–cysteine 105, and cysteine 130–cysteine 146. The alpha-L-fucose site is built by histidine 75 and arginine 101. A Cell attachment site motif is present at residues 101-103 (RGD). Arginine 108 lines the alpha-L-fucose pocket. Residues cysteine 168 and glutamate 169 each coordinate Ca(2+).

The protein belongs to the fucolectin family. In terms of assembly, homotrimer. In terms of tissue distribution, parenchymal hepatocytes.

It is found in the secreted. Its subcellular location is the extracellular space. Functionally, acts as a defensive agent. Recognizes blood group fucosylated oligosaccharides including A, B, H and Lewis B-type antigens. Does not recognize Lewis A antigen and has low affinity for monovalent haptens. In Anguilla japonica (Japanese eel), this protein is Fucolectin-2.